Here is a 22-residue protein sequence, read N- to C-terminus: Protein YncP (22 aa).

In Escherichia coli (strain K12), this protein is Protein YncP.